We begin with the raw amino-acid sequence, 591 residues long: Aspartate--tRNA(Asp/Asn) ligase (591 aa).

Glu174 contacts L-aspartate. The tract at residues 198–201 (QLFK) is aspartate. Arg220 is an L-aspartate binding site. Residues 220–222 (RDE) and Gln229 contribute to the ATP site. His450 provides a ligand contact to L-aspartate. Residue Glu483 participates in ATP binding. Arg490 provides a ligand contact to L-aspartate. 535-538 (GLDR) lines the ATP pocket.

This sequence belongs to the class-II aminoacyl-tRNA synthetase family. Type 1 subfamily. In terms of assembly, homodimer.

The protein resides in the cytoplasm. It carries out the reaction tRNA(Asx) + L-aspartate + ATP = L-aspartyl-tRNA(Asx) + AMP + diphosphate. Aspartyl-tRNA synthetase with relaxed tRNA specificity since it is able to aspartylate not only its cognate tRNA(Asp) but also tRNA(Asn). Reaction proceeds in two steps: L-aspartate is first activated by ATP to form Asp-AMP and then transferred to the acceptor end of tRNA(Asp/Asn). The sequence is that of Aspartate--tRNA(Asp/Asn) ligase from Pseudomonas savastanoi pv. phaseolicola (strain 1448A / Race 6) (Pseudomonas syringae pv. phaseolicola (strain 1448A / Race 6)).